A 184-amino-acid chain; its full sequence is ATP synthase subunit b, chloroplastic (184 aa).

A helical transmembrane segment spans residues 27–49 (LATNLINLSVVLGVLIFFGKGVL).

This sequence belongs to the ATPase B chain family. As to quaternary structure, F-type ATPases have 2 components, F(1) - the catalytic core - and F(0) - the membrane proton channel. F(1) has five subunits: alpha(3), beta(3), gamma(1), delta(1), epsilon(1). F(0) has four main subunits: a(1), b(1), b'(1) and c(10-14). The alpha and beta chains form an alternating ring which encloses part of the gamma chain. F(1) is attached to F(0) by a central stalk formed by the gamma and epsilon chains, while a peripheral stalk is formed by the delta, b and b' chains.

The protein localises to the plastid. It is found in the chloroplast thylakoid membrane. In terms of biological role, f(1)F(0) ATP synthase produces ATP from ADP in the presence of a proton or sodium gradient. F-type ATPases consist of two structural domains, F(1) containing the extramembraneous catalytic core and F(0) containing the membrane proton channel, linked together by a central stalk and a peripheral stalk. During catalysis, ATP synthesis in the catalytic domain of F(1) is coupled via a rotary mechanism of the central stalk subunits to proton translocation. Functionally, component of the F(0) channel, it forms part of the peripheral stalk, linking F(1) to F(0). This is ATP synthase subunit b, chloroplastic from Spinacia oleracea (Spinach).